We begin with the raw amino-acid sequence, 216 residues long: Uracil phosphoribosyltransferase (216 aa).

30 to 34 (KNLVR) is a binding site for GTP. Residues R80, R105, and 140–148 (DPMIATAST) contribute to the 5-phospho-alpha-D-ribose 1-diphosphate site. Uracil is bound by residues I203 and 208–210 (GDA). 5-phospho-alpha-D-ribose 1-diphosphate is bound at residue D209.

The protein belongs to the UPRTase family. Mg(2+) serves as cofactor.

The catalysed reaction is UMP + diphosphate = 5-phospho-alpha-D-ribose 1-diphosphate + uracil. It participates in pyrimidine metabolism; UMP biosynthesis via salvage pathway; UMP from uracil: step 1/1. With respect to regulation, allosterically activated by GTP. Functionally, catalyzes the conversion of uracil and 5-phospho-alpha-D-ribose 1-diphosphate (PRPP) to UMP and diphosphate. The polypeptide is Uracil phosphoribosyltransferase (Saccharolobus islandicus (strain M.16.4 / Kamchatka #3) (Sulfolobus islandicus)).